Reading from the N-terminus, the 233-residue chain is Ribonuclease 3 (233 aa).

The RNase III domain maps to 8–135; that stretch reads AQRFLEDKQL…VIGAIYLDQG (128 aa). Position 48 (glutamate 48) interacts with Mg(2+). Residue aspartate 52 is part of the active site. Residues aspartate 121 and glutamate 124 each contribute to the Mg(2+) site. Glutamate 124 is an active-site residue. One can recognise a DRBM domain in the interval 161 to 230; sequence DYKSKLQELV…AQKVLQDNLV (70 aa).

The protein belongs to the ribonuclease III family. As to quaternary structure, homodimer. The cofactor is Mg(2+).

It localises to the cytoplasm. It carries out the reaction Endonucleolytic cleavage to 5'-phosphomonoester.. Its function is as follows. Digests double-stranded RNA. Involved in the processing of primary rRNA transcript to yield the immediate precursors to the large and small rRNAs (23S and 16S). Processes some mRNAs, and tRNAs when they are encoded in the rRNA operon. Processes pre-crRNA and tracrRNA of type II CRISPR loci if present in the organism. The protein is Ribonuclease 3 of Syntrophomonas wolfei subsp. wolfei (strain DSM 2245B / Goettingen).